Consider the following 346-residue polypeptide: Large ribosomal subunit protein uL1c (346 aa).

A chloroplast-targeting transit peptide spans M1–S70. Y129 is subject to Phosphotyrosine. T177 bears the Phosphothreonine mark. A Phosphoserine modification is found at S197.

The protein belongs to the universal ribosomal protein uL1 family. Part of the 50S ribosomal subunit.

Its subcellular location is the plastid. The protein resides in the chloroplast. Its function is as follows. This protein binds directly to 23S ribosomal RNA. This Arabidopsis thaliana (Mouse-ear cress) protein is Large ribosomal subunit protein uL1c (RPL1).